Here is a 1412-residue protein sequence, read N- to C-terminus: DNA-directed RNA polymerase subunit beta' (1412 aa).

Mg(2+) is bound by residues Asp-543, Asp-545, and Asp-547. Cys-1017, Cys-1092, Cys-1099, and Cys-1102 together coordinate Zn(2+).

This sequence belongs to the RNA polymerase beta' chain family. The RNAP catalytic core consists of 2 alpha, 1 beta, 1 beta' and 1 omega subunit. When a sigma factor is associated with the core the holoenzyme is formed, which can initiate transcription. It depends on Mg(2+) as a cofactor. The cofactor is Zn(2+).

It catalyses the reaction RNA(n) + a ribonucleoside 5'-triphosphate = RNA(n+1) + diphosphate. Its function is as follows. DNA-dependent RNA polymerase catalyzes the transcription of DNA into RNA using the four ribonucleoside triphosphates as substrates. In Mesomycoplasma hyopneumoniae (strain J / ATCC 25934 / NCTC 10110) (Mycoplasma hyopneumoniae), this protein is DNA-directed RNA polymerase subunit beta'.